The chain runs to 283 residues: 4-hydroxy-3-methylbut-2-enyl diphosphate reductase (283 aa).

C12 is a [4Fe-4S] cluster binding site. (2E)-4-hydroxy-3-methylbut-2-enyl diphosphate-binding residues include H40 and H73. Dimethylallyl diphosphate-binding residues include H40 and H73. H40 and H73 together coordinate isopentenyl diphosphate. Residue C95 coordinates [4Fe-4S] cluster. H123 provides a ligand contact to (2E)-4-hydroxy-3-methylbut-2-enyl diphosphate. H123 provides a ligand contact to dimethylallyl diphosphate. An isopentenyl diphosphate-binding site is contributed by H123. E125 (proton donor) is an active-site residue. T161 provides a ligand contact to (2E)-4-hydroxy-3-methylbut-2-enyl diphosphate. C189 serves as a coordination point for [4Fe-4S] cluster. Positions 217, 219, and 261 each coordinate (2E)-4-hydroxy-3-methylbut-2-enyl diphosphate. Dimethylallyl diphosphate-binding residues include S217, N219, and S261. The isopentenyl diphosphate site is built by S217, N219, and S261.

This sequence belongs to the IspH family. The cofactor is [4Fe-4S] cluster.

The enzyme catalyses isopentenyl diphosphate + 2 oxidized [2Fe-2S]-[ferredoxin] + H2O = (2E)-4-hydroxy-3-methylbut-2-enyl diphosphate + 2 reduced [2Fe-2S]-[ferredoxin] + 2 H(+). The catalysed reaction is dimethylallyl diphosphate + 2 oxidized [2Fe-2S]-[ferredoxin] + H2O = (2E)-4-hydroxy-3-methylbut-2-enyl diphosphate + 2 reduced [2Fe-2S]-[ferredoxin] + 2 H(+). The protein operates within isoprenoid biosynthesis; dimethylallyl diphosphate biosynthesis; dimethylallyl diphosphate from (2E)-4-hydroxy-3-methylbutenyl diphosphate: step 1/1. Its pathway is isoprenoid biosynthesis; isopentenyl diphosphate biosynthesis via DXP pathway; isopentenyl diphosphate from 1-deoxy-D-xylulose 5-phosphate: step 6/6. In terms of biological role, catalyzes the conversion of 1-hydroxy-2-methyl-2-(E)-butenyl 4-diphosphate (HMBPP) into a mixture of isopentenyl diphosphate (IPP) and dimethylallyl diphosphate (DMAPP). Acts in the terminal step of the DOXP/MEP pathway for isoprenoid precursor biosynthesis. The chain is 4-hydroxy-3-methylbut-2-enyl diphosphate reductase from Geobacter sp. (strain M21).